Here is a 658-residue protein sequence, read N- to C-terminus: Cysteine-rich receptor-like protein kinase 14 (658 aa).

An N-terminal signal peptide occupies residues Met-1–Ala-22. Gnk2-homologous domains follow at residues Gln-23 to Phe-125 and Ala-131 to Phe-240. Residues Gln-23 to Ser-277 lie on the Extracellular side of the membrane. Asn-51, Asn-60, Asn-102, Asn-122, and Asn-146 each carry an N-linked (GlcNAc...) asparagine glycan. A helical membrane pass occupies residues Ile-278–Ala-298. Over Leu-299–Arg-658 the chain is Cytoplasmic. In terms of domain architecture, Protein kinase spans Phe-337–Val-614. Residues Ile-343–Val-351 and Lys-364 contribute to the ATP site. Position 409 is a phosphotyrosine (Tyr-409). Residue Asp-461 is the Proton acceptor of the active site. Residue Ser-465 is modified to Phosphoserine. Thr-501 carries the post-translational modification Phosphothreonine. Tyr-509 bears the Phosphotyrosine mark.

This sequence belongs to the protein kinase superfamily. Ser/Thr protein kinase family. CRK subfamily.

It localises to the membrane. It catalyses the reaction L-seryl-[protein] + ATP = O-phospho-L-seryl-[protein] + ADP + H(+). It carries out the reaction L-threonyl-[protein] + ATP = O-phospho-L-threonyl-[protein] + ADP + H(+). This Arabidopsis thaliana (Mouse-ear cress) protein is Cysteine-rich receptor-like protein kinase 14 (CRK14).